The sequence spans 212 residues: Uridine kinase (212 aa).

Position 13-20 (13-20 (GGSGSGKT)) interacts with ATP.

Belongs to the uridine kinase family.

Its subcellular location is the cytoplasm. The catalysed reaction is uridine + ATP = UMP + ADP + H(+). It carries out the reaction cytidine + ATP = CMP + ADP + H(+). It functions in the pathway pyrimidine metabolism; CTP biosynthesis via salvage pathway; CTP from cytidine: step 1/3. The protein operates within pyrimidine metabolism; UMP biosynthesis via salvage pathway; UMP from uridine: step 1/1. This Bacillus cytotoxicus (strain DSM 22905 / CIP 110041 / 391-98 / NVH 391-98) protein is Uridine kinase.